A 380-amino-acid polypeptide reads, in one-letter code: Queuine tRNA-ribosyltransferase (380 aa).

Asp95 functions as the Proton acceptor in the catalytic mechanism. Residues 95–99, Asp149, Gln192, and Gly219 each bind substrate; that span reads DSGGF. The interval 250-256 is RNA binding; it reads GVGSADA. Asp269 (nucleophile) is an active-site residue. Residues 274–278 form an RNA binding; important for wobble base 34 recognition region; the sequence is TRIAR. The Zn(2+) site is built by Cys307, Cys309, Cys312, and His338.

This sequence belongs to the queuine tRNA-ribosyltransferase family. In terms of assembly, homodimer. Within each dimer, one monomer is responsible for RNA recognition and catalysis, while the other monomer binds to the replacement base PreQ1. Zn(2+) serves as cofactor.

The enzyme catalyses 7-aminomethyl-7-carbaguanine + guanosine(34) in tRNA = 7-aminomethyl-7-carbaguanosine(34) in tRNA + guanine. It participates in tRNA modification; tRNA-queuosine biosynthesis. Catalyzes the base-exchange of a guanine (G) residue with the queuine precursor 7-aminomethyl-7-deazaguanine (PreQ1) at position 34 (anticodon wobble position) in tRNAs with GU(N) anticodons (tRNA-Asp, -Asn, -His and -Tyr). Catalysis occurs through a double-displacement mechanism. The nucleophile active site attacks the C1' of nucleotide 34 to detach the guanine base from the RNA, forming a covalent enzyme-RNA intermediate. The proton acceptor active site deprotonates the incoming PreQ1, allowing a nucleophilic attack on the C1' of the ribose to form the product. After dissociation, two additional enzymatic reactions on the tRNA convert PreQ1 to queuine (Q), resulting in the hypermodified nucleoside queuosine (7-(((4,5-cis-dihydroxy-2-cyclopenten-1-yl)amino)methyl)-7-deazaguanosine). The sequence is that of Queuine tRNA-ribosyltransferase from Lactiplantibacillus plantarum (strain ATCC BAA-793 / NCIMB 8826 / WCFS1) (Lactobacillus plantarum).